A 98-amino-acid polypeptide reads, in one-letter code: Aspartyl/glutamyl-tRNA(Asn/Gln) amidotransferase subunit C (98 aa).

The protein belongs to the GatC family. In terms of assembly, heterotrimer of A, B and C subunits.

The catalysed reaction is L-glutamyl-tRNA(Gln) + L-glutamine + ATP + H2O = L-glutaminyl-tRNA(Gln) + L-glutamate + ADP + phosphate + H(+). The enzyme catalyses L-aspartyl-tRNA(Asn) + L-glutamine + ATP + H2O = L-asparaginyl-tRNA(Asn) + L-glutamate + ADP + phosphate + 2 H(+). Functionally, allows the formation of correctly charged Asn-tRNA(Asn) or Gln-tRNA(Gln) through the transamidation of misacylated Asp-tRNA(Asn) or Glu-tRNA(Gln) in organisms which lack either or both of asparaginyl-tRNA or glutaminyl-tRNA synthetases. The reaction takes place in the presence of glutamine and ATP through an activated phospho-Asp-tRNA(Asn) or phospho-Glu-tRNA(Gln). The protein is Aspartyl/glutamyl-tRNA(Asn/Gln) amidotransferase subunit C of Gloeothece citriformis (strain PCC 7424) (Cyanothece sp. (strain PCC 7424)).